The primary structure comprises 97 residues: Ferredoxin-thioredoxin reductase, variable chain (97 aa).

It belongs to the ferredoxin thioredoxin reductase alpha subunit family. Heterodimer of subunit A (variable subunit) and subunit B (catalytic subunit). Heterodimeric FTR forms a complex with ferredoxin and thioredoxin.

It is found in the plastid. The protein resides in the chloroplast. Functionally, variable subunit of the ferredoxin-thioredoxin reductase (FTR), which catalyzes the two-electron reduction of thioredoxins by the electrons provided by reduced ferredoxin. This is Ferredoxin-thioredoxin reductase, variable chain from Zea mays (Maize).